Consider the following 339-residue polypeptide: WAT1-related protein At5g40210 (339 aa).

10 helical membrane-spanning segments follow: residues 11–31 (GWIL…NTLV), 42–62 (FVVL…LTFF), 74–94 (FSIL…QILG), 104–124 (TLSS…AVVF), 140–160 (VLGT…HGPM), 168–188 (WIIG…SYLV), 200–220 (VVVT…VSLL), 233–253 (FDIT…YYVI), 266–286 (LSMF…IFLG), and 289–309 (LYLG…MVLW). The 126-residue stretch at 29–154 (TLVKAATSKG…LSIIGALVVT (126 aa)) folds into the EamA domain.

The protein belongs to the drug/metabolite transporter (DMT) superfamily. Plant drug/metabolite exporter (P-DME) (TC 2.A.7.4) family.

The protein resides in the membrane. The protein is WAT1-related protein At5g40210 of Arabidopsis thaliana (Mouse-ear cress).